We begin with the raw amino-acid sequence, 443 residues long: ATP-dependent protease ATPase subunit HslU (443 aa).

Residues isoleucine 20, 62 to 67, aspartate 255, glutamate 321, and arginine 393 each bind ATP; that span reads GVGKTE.

Belongs to the ClpX chaperone family. HslU subfamily. A double ring-shaped homohexamer of HslV is capped on each side by a ring-shaped HslU homohexamer. The assembly of the HslU/HslV complex is dependent on binding of ATP.

Its subcellular location is the cytoplasm. Functionally, ATPase subunit of a proteasome-like degradation complex; this subunit has chaperone activity. The binding of ATP and its subsequent hydrolysis by HslU are essential for unfolding of protein substrates subsequently hydrolyzed by HslV. HslU recognizes the N-terminal part of its protein substrates and unfolds these before they are guided to HslV for hydrolysis. The chain is ATP-dependent protease ATPase subunit HslU from Helicobacter pylori (strain P12).